A 387-amino-acid chain; its full sequence is ATP phosphoribosyltransferase regulatory subunit (387 aa).

This sequence belongs to the class-II aminoacyl-tRNA synthetase family. HisZ subfamily. As to quaternary structure, heteromultimer composed of HisG and HisZ subunits.

The protein localises to the cytoplasm. The protein operates within amino-acid biosynthesis; L-histidine biosynthesis; L-histidine from 5-phospho-alpha-D-ribose 1-diphosphate: step 1/9. Its function is as follows. Required for the first step of histidine biosynthesis. May allow the feedback regulation of ATP phosphoribosyltransferase activity by histidine. The chain is ATP phosphoribosyltransferase regulatory subunit from Polynucleobacter necessarius subsp. necessarius (strain STIR1).